We begin with the raw amino-acid sequence, 701 residues long: Conserved oligomeric Golgi complex subunit 1 (701 aa).

The protein belongs to the COG1 family. Component of the conserved oligomeric Golgi (COG) complex which consists of eight different proteins cog1-cog8.

It is found in the cytoplasm. The protein localises to the nucleus. The protein resides in the golgi apparatus membrane. In terms of biological role, acts as essential component of the peripheral membrane COG complex that is involved in intra-Golgi protein trafficking. COG is located at the cis-Golgi, and regulates tethering of retrograde intra-Golgi vesicles and possibly a number of other membrane trafficking events. This Schizosaccharomyces pombe (strain 972 / ATCC 24843) (Fission yeast) protein is Conserved oligomeric Golgi complex subunit 1 (cog1).